The following is a 574-amino-acid chain: Aspartate--tRNA ligase (574 aa).

Glu169 is an L-aspartate binding site. The segment at 193-196 is aspartate; that stretch reads QLFK. Residue Arg215 participates in L-aspartate binding. ATP contacts are provided by residues 215–217 and Gln224; that span reads RDE. An L-aspartate-binding site is contributed by His437. ATP is bound at residue Glu471. Arg478 lines the L-aspartate pocket. 523 to 526 lines the ATP pocket; that stretch reads GLDR.

It belongs to the class-II aminoacyl-tRNA synthetase family. Type 1 subfamily. Homodimer.

It localises to the cytoplasm. It catalyses the reaction tRNA(Asp) + L-aspartate + ATP = L-aspartyl-tRNA(Asp) + AMP + diphosphate. In terms of biological role, catalyzes the attachment of L-aspartate to tRNA(Asp) in a two-step reaction: L-aspartate is first activated by ATP to form Asp-AMP and then transferred to the acceptor end of tRNA(Asp). The chain is Aspartate--tRNA ligase from Mycoplasma mycoides subsp. mycoides SC (strain CCUG 32753 / NCTC 10114 / PG1).